Reading from the N-terminus, the 185-residue chain is NEDD8-conjugating enzyme UBE2F (185 aa).

At methionine 1 the chain carries N-acetylmethionine. The tract at residues methionine 1–arginine 29 is interaction with UBA3. The UBC core domain maps to valine 32–arginine 185. Cysteine 116 (glycyl thioester intermediate) is an active-site residue.

This sequence belongs to the ubiquitin-conjugating enzyme family. UBE2F subfamily. As to quaternary structure, interacts with UBA3 and RBX2. Interacts (N-terminally acetylated form) with (via DCUN1 domain) DCUN1D1, DCUN1D2, DCUN1D3, DCUN1D4 and DCUN1D5. The acetylation of Met-1 increases affinity for DCUN1D3 by about 2 orders of magnitude and is crucial for NEDD8 transfer to cullins. As to expression, widely expressed (at protein level).

The enzyme catalyses [E1 NEDD8-activating enzyme]-S-[NEDD8 protein]-yl-L-cysteine + [E2 NEDD8-conjugating enzyme]-L-cysteine = [E1 NEDD8-activating enzyme]-L-cysteine + [E2 NEDD8-conjugating enzyme]-S-[NEDD8-protein]-yl-L-cysteine.. Its pathway is protein modification; protein neddylation. Its function is as follows. Accepts the ubiquitin-like protein NEDD8 from the UBA3-NAE1 E1 complex and catalyzes its covalent attachment to other proteins. Together with the E3 ubiquitin ligase RNF7/RBX2, specifically neddylates cullin-5 (CUL5). Does not neddylate CUL1, CUL2, CUL3, CUL4A or CUL4B. Mediates neddylation of the CUL9-RBX1 complex. In terms of biological role, (Microbial infection) Following infection by HIV-1 virus, participates to HIV-1 Vif protein-mediated ubiquitination and degradation of APOBEC3G by mediating neddylation of cullin-5 (CUL5). This Homo sapiens (Human) protein is NEDD8-conjugating enzyme UBE2F (UBE2F).